We begin with the raw amino-acid sequence, 340 residues long: Phosphoribosylformylglycinamidine cyclo-ligase (340 aa).

This sequence belongs to the AIR synthase family.

It is found in the cytoplasm. The catalysed reaction is 2-formamido-N(1)-(5-O-phospho-beta-D-ribosyl)acetamidine + ATP = 5-amino-1-(5-phospho-beta-D-ribosyl)imidazole + ADP + phosphate + H(+). It participates in purine metabolism; IMP biosynthesis via de novo pathway; 5-amino-1-(5-phospho-D-ribosyl)imidazole from N(2)-formyl-N(1)-(5-phospho-D-ribosyl)glycinamide: step 2/2. The sequence is that of Phosphoribosylformylglycinamidine cyclo-ligase from Streptococcus pyogenes serotype M2 (strain MGAS10270).